A 531-amino-acid polypeptide reads, in one-letter code: Isocitrate lyase (531 aa).

Position 101–103 (101–103 (SGW)) interacts with substrate. Asp184 contacts Mg(2+). The active-site Proton acceptor is the Cys222. Substrate is bound by residues 223-224 (GH), 380-384 (NNSPS), and Thr451.

The protein belongs to the isocitrate lyase/PEP mutase superfamily. Isocitrate lyase family. Homotetramer. Requires Mg(2+) as cofactor.

It catalyses the reaction D-threo-isocitrate = glyoxylate + succinate. The protein operates within carbohydrate metabolism; glyoxylate cycle; (S)-malate from isocitrate: step 1/2. Its function is as follows. Involved in the metabolic adaptation in response to environmental changes. Catalyzes the reversible formation of succinate and glyoxylate from isocitrate, a key step of the glyoxylate cycle, which operates as an anaplerotic route for replenishing the tricarboxylic acid cycle during growth on fatty acid substrates. In Pseudomonas aeruginosa (strain ATCC 15692 / DSM 22644 / CIP 104116 / JCM 14847 / LMG 12228 / 1C / PRS 101 / PAO1), this protein is Isocitrate lyase.